The primary structure comprises 179 residues: Ubiquitin-conjugating enzyme E2 C (179 aa).

The segment at 1–31 is disordered; it reads MASQNVDPAAASSVASRKGQESGTSAARGSV. In terms of domain architecture, UBC core spans 30–179; sequence SVGKRLQQEL…YQKQVREKEI (150 aa). The active-site Glycyl thioester intermediate is C114.

It belongs to the ubiquitin-conjugating enzyme family. In terms of assembly, component of the APC/C complex. Autoubiquitinated by the APC/C complex, leading to its degradation by the proteasome.

The enzyme catalyses S-ubiquitinyl-[E1 ubiquitin-activating enzyme]-L-cysteine + [E2 ubiquitin-conjugating enzyme]-L-cysteine = [E1 ubiquitin-activating enzyme]-L-cysteine + S-ubiquitinyl-[E2 ubiquitin-conjugating enzyme]-L-cysteine.. It catalyses the reaction S-ubiquitinyl-[E1 ubiquitin-activating enzyme]-L-cysteine + [acceptor protein]-L-lysine = [E1 ubiquitin-activating enzyme]-L-cysteine + N(6)-monoubiquitinyl-[acceptor protein]-L-lysine.. The protein operates within protein modification; protein ubiquitination. Its function is as follows. Catalyzes the covalent attachment of ubiquitin to other proteins. Acts as an essential factor of the anaphase promoting complex/cyclosome (APC/C), a cell cycle-regulated ubiquitin ligase that controls progression through mitosis. Acts by initiating 'Lys-11'-linked polyubiquitin chains on APC/C substrates, leading to the degradation of APC/C substrates by the proteasome and promoting mitotic exit. The protein is Ubiquitin-conjugating enzyme E2 C (ube2c) of Xenopus laevis (African clawed frog).